The chain runs to 231 residues: Cytidylate kinase 1 (231 aa).

7–15 (GPSGAGKGT) lines the ATP pocket.

It belongs to the cytidylate kinase family. Type 1 subfamily.

The protein localises to the cytoplasm. The catalysed reaction is CMP + ATP = CDP + ADP. The enzyme catalyses dCMP + ATP = dCDP + ADP. This chain is Cytidylate kinase 1, found in Haemophilus influenzae (strain ATCC 51907 / DSM 11121 / KW20 / Rd).